The primary structure comprises 350 residues: Ion-translocating oxidoreductase complex subunit D (350 aa).

Transmembrane regions (helical) follow at residues 37–57 (YYFGYGTLVQLLLAITVAYLA), 78–109 (ALVTASLLAVAIPPLAPWWLIVIGTLFAIVIV), 124–144 (AMAAYVLLLISFPVQMTSWVA), and 158–178 (TFNSIFQLNAGYAADFFHLAI). Thr185 is subject to FMN phosphoryl threonine. 5 helical membrane-spanning segments follow: residues 212 to 232 (SVGEGWFWVNMAYLVGGLVML), 239 to 259 (WHISGAIVLTLFVCASIGFLI), 264 to 284 (FVSPIMHLFSGGTMLAAFFIA), 298 to 318 (LIFGAMIGLLIYLIRTFGGYP), and 319 to 339 (DAVAFAVLLANMCAPFIDYYV).

Belongs to the NqrB/RnfD family. As to quaternary structure, the complex is composed of six subunits: RnfA, RnfB, RnfC, RnfD, RnfE and RnfG. Requires FMN as cofactor.

The protein localises to the cell inner membrane. Its function is as follows. Part of a membrane-bound complex that couples electron transfer with translocation of ions across the membrane. The chain is Ion-translocating oxidoreductase complex subunit D from Shewanella frigidimarina (strain NCIMB 400).